The sequence spans 267 residues: PHD finger protein ALFIN-LIKE 7 (267 aa).

Residues 162-207 (TKVSNGSSKSNKSNPKPSKQSNSNSKPAKPPQPKDEEDSGPEGAED) form a disordered region. Positions 165–188 (SNGSSKSNKSNPKPSKQSNSNSKP) are enriched in low complexity. The segment covering 196 to 207 (DEEDSGPEGAED) has biased composition (acidic residues). The PHD-type zinc-finger motif lies at 211–263 (AYMCGACGETYANGEFWICCDVCEKWFHGKCVRITPAKAEHIKQYKCPGCSSK).

This sequence belongs to the Alfin family. As to quaternary structure, interacts with H3K4me3 and to a lesser extent with H3K4me2.

The protein localises to the nucleus. Functionally, histone-binding component that specifically recognizes H3 tails trimethylated on 'Lys-4' (H3K4me3), which mark transcription start sites of virtually all active genes. The chain is PHD finger protein ALFIN-LIKE 7 from Oryza sativa subsp. indica (Rice).